The following is a 627-amino-acid chain: Protein CER1-like 1 (627 aa).

A run of 5 helical transmembrane segments spans residues 19 to 39, 48 to 68, 126 to 146, 186 to 206, and 328 to 348; these read FKYL…VTAV, LMIV…ISVS, GAIL…YWFH, LLFA…IVSI, and YLTC…TSAI. In terms of domain architecture, Fatty acid hydroxylase spans 138–272; it reads VEFLYYWFHR…MPIYDFIYGT (135 aa).

The protein belongs to the sterol desaturase family. Expressed in flowers and siliques. Not detected in pollen, pedicels and seeds.

It localises to the membrane. This is Protein CER1-like 1 from Arabidopsis thaliana (Mouse-ear cress).